The sequence spans 471 residues: Glutamate--tRNA ligase 1 (471 aa).

A 'HIGH' region motif is present at residues 10–20 (PSPTGYLHIGG). Zn(2+) contacts are provided by cysteine 99, cysteine 101, cysteine 126, and aspartate 128. Residues 238 to 242 (RLSKR) carry the 'KMSKS' region motif. Residue lysine 241 coordinates ATP.

This sequence belongs to the class-I aminoacyl-tRNA synthetase family. Glutamate--tRNA ligase type 1 subfamily. In terms of assembly, monomer. Zn(2+) is required as a cofactor.

The protein localises to the cytoplasm. It carries out the reaction tRNA(Glu) + L-glutamate + ATP = L-glutamyl-tRNA(Glu) + AMP + diphosphate. Its function is as follows. Catalyzes the attachment of glutamate to tRNA(Glu) in a two-step reaction: glutamate is first activated by ATP to form Glu-AMP and then transferred to the acceptor end of tRNA(Glu). This Alkalilimnicola ehrlichii (strain ATCC BAA-1101 / DSM 17681 / MLHE-1) protein is Glutamate--tRNA ligase 1.